The sequence spans 364 residues: MQPRDLSDHSPYVPGRGVEEVARDRGLDPDDLIKLSSNENPHGPSPAAVDAIREHADRVHQYPKSSHTDLTAKLAEKWDVSTEQVWVSPGADGSIDYLSRAALEPGDEVLVPEPGFAYYAMSARYHHGEVSEYALSPDDGFAQDAETVLSAYGGERIVYLTSPHNPSGSVMPLDEVRAIADATAEETLVVVDEAYGEFAEVDSAIPLVDERDDVAVLRTFSKAYGLAGLRIGYSVVPEAWGEAYARVNTPFAANELACRAALAALDDEEHVAESVETARWAREYIADELDAPTVESAGNFVLAEVGDAERVAEEAQERGVIIRDCTSFGLPNHVRISTGTREGTREAVARLNETLADLGLGVRA.

The segment at 1 to 46 is disordered; it reads MQPRDLSDHSPYVPGRGVEEVARDRGLDPDDLIKLSSNENPHGPSP. A compositionally biased stretch (basic and acidic residues) spans 17 to 33; sequence GVEEVARDRGLDPDDLI. An N6-(pyridoxal phosphate)lysine modification is found at Lys-222.

This sequence belongs to the class-II pyridoxal-phosphate-dependent aminotransferase family. Histidinol-phosphate aminotransferase subfamily. Pyridoxal 5'-phosphate is required as a cofactor.

The catalysed reaction is L-histidinol phosphate + 2-oxoglutarate = 3-(imidazol-4-yl)-2-oxopropyl phosphate + L-glutamate. It functions in the pathway amino-acid biosynthesis; L-histidine biosynthesis; L-histidine from 5-phospho-alpha-D-ribose 1-diphosphate: step 7/9. This Halorubrum lacusprofundi (strain ATCC 49239 / DSM 5036 / JCM 8891 / ACAM 34) protein is Histidinol-phosphate aminotransferase.